Here is a 448-residue protein sequence, read N- to C-terminus: N-succinylarginine dihydrolase (448 aa).

Residues 19–28, N110, and 137–138 contribute to the substrate site; these read AGLSSGNIAS and HR. E174 is an active-site residue. R216 is a substrate binding site. H252 is a catalytic residue. D254 and N366 together coordinate substrate. C372 serves as the catalytic Nucleophile.

The protein belongs to the succinylarginine dihydrolase family. Homodimer.

The catalysed reaction is N(2)-succinyl-L-arginine + 2 H2O + 2 H(+) = N(2)-succinyl-L-ornithine + 2 NH4(+) + CO2. It participates in amino-acid degradation; L-arginine degradation via AST pathway; L-glutamate and succinate from L-arginine: step 2/5. Its function is as follows. Catalyzes the hydrolysis of N(2)-succinylarginine into N(2)-succinylornithine, ammonia and CO(2). The sequence is that of N-succinylarginine dihydrolase from Legionella pneumophila (strain Corby).